The following is a 139-amino-acid chain: Small ribosomal subunit protein eS12 (139 aa).

Belongs to the eukaryotic ribosomal protein eS12 family. Subunit of the 40S ribosomal complex. Part of the small subunit (SSU) processome, composed of more than 70 proteins and the RNA chaperone small nucleolar RNA (snoRNA) U3.

It is found in the nucleus. Its subcellular location is the nucleolus. In terms of biological role, subunit of the 40S ribosomal complex. Part of the small subunit (SSU) processome, first precursor of the small eukaryotic ribosomal subunit. During the assembly of the SSU processome in the nucleolus, many ribosome biogenesis factors, an RNA chaperone and ribosomal proteins associate with the nascent pre-rRNA and work in concert to generate RNA folding, modifications, rearrangements and cleavage as well as targeted degradation of pre-ribosomal RNA by the RNA exosome. In wing imaginal disks, might have a role in translation rate, growth and cell competition, probably through regulation of Xrp1 expression. Might have a role in development and longevity. This Drosophila melanogaster (Fruit fly) protein is Small ribosomal subunit protein eS12.